Reading from the N-terminus, the 117-residue chain is Small ribosomal subunit protein bS6m (117 aa).

Belongs to the bacterial ribosomal protein bS6 family. In terms of assembly, component of the mitochondrial small ribosomal subunit (mt-SSU). Mature N.crassa 74S mitochondrial ribosomes consist of a small (37S) and a large (54S) subunit. The 37S small subunit contains a 16S ribosomal RNA (16S mt-rRNA) and 32 different proteins. The 54S large subunit contains a 23S rRNA (23S mt-rRNA) and 42 different proteins.

The protein localises to the mitochondrion. Component of the mitochondrial ribosome (mitoribosome), a dedicated translation machinery responsible for the synthesis of mitochondrial genome-encoded proteins, including at least some of the essential transmembrane subunits of the mitochondrial respiratory chain. The mitoribosomes are attached to the mitochondrial inner membrane and translation products are cotranslationally integrated into the membrane. The chain is Small ribosomal subunit protein bS6m (mrp17) from Neurospora crassa (strain ATCC 24698 / 74-OR23-1A / CBS 708.71 / DSM 1257 / FGSC 987).